The sequence spans 212 residues: 3-isopropylmalate dehydratase small subunit (212 aa).

This sequence belongs to the LeuD family. LeuD type 1 subfamily. Heterodimer of LeuC and LeuD.

The enzyme catalyses (2R,3S)-3-isopropylmalate = (2S)-2-isopropylmalate. Its pathway is amino-acid biosynthesis; L-leucine biosynthesis; L-leucine from 3-methyl-2-oxobutanoate: step 2/4. Catalyzes the isomerization between 2-isopropylmalate and 3-isopropylmalate, via the formation of 2-isopropylmaleate. This is 3-isopropylmalate dehydratase small subunit from Nitrosomonas eutropha (strain DSM 101675 / C91 / Nm57).